A 269-amino-acid chain; its full sequence is uncharacterized protein (269 aa).

This is an uncharacterized protein from Acanthamoeba polyphaga mimivirus (APMV).